The chain runs to 783 residues: MIFLNTFARCLLTCFVLCSGTARSSDTNDTTPASAKHLQTTSLLTCMDNSQLTASFFDVKFYPDNNTVIFDIDATTTLNGNVTVKAELLTYGLKVLDKTFDLCSLGQVSLCPLSAGRIDVMSTQVIESSITKQFPGIAYTIPDLDAQVRVVAYAQNDTEFETPLACVQAILSNGKTVQTKYAAWPIAAISGVGVLTSGFVSVIGYSATAAHIASNSISLFIYFQNLAITAMMGVSRVPPIAAAWTQNFQWSMGIINTNFMQKIFDWYVQATNGVSNVVVANKDVLSISVQKRAISMASSSDYNFDTILDDSNLYTTSEKDPSNYSAKILVLRGIERVAYLANIELSNFFLTGIVFFLFFLFVVVVSLIFFKALLEVLTRARILKETSNFFQYRKNWGSIIKGTLFRLSIIAFPQVSLLAIWEFTQVNSPAIVVDAVVILLIITGLLVYGTIRVFIKGRESLRLYKNPAYLLYSDTYFLNKFGFLYVQFKADKFWWLLPLLSYAFLRSLFVAVLQNQGKAQAMIIFVIELAYFVCLCWIRPYLDKRTNVFNIAIHLVNLINAFFFLFFSNLFKQPAVVSSVMAVILFVLNAVFALFLLLFTIVTCTLALLHRNPDVRYQPMKDDRVSFIPKIQNDFDGKNKNDSELFELRKAVMDTNENEEEKMFRDDTFGKNLNANTNTARLFDDETSSSSFKQNSSPFDASEVTEQPVQPTSAVMGTGGSFLSPQYQRASSASRTNLAPNNTSTSSLMKPESSLYLGNSNKSYSHFNNNGSNENARNNNPYL.

A signal peptide spans 1–22; it reads MIFLNTFARCLLTCFVLCSGTA. Topologically, residues 23-182 are lumenal; the sequence is RSSDTNDTTP…NGKTVQTKYA (160 aa). N-linked (GlcNAc...) asparagine glycans are attached at residues Asn28, Asn65, Asn81, and Asn156. Residues 183–203 traverse the membrane as a helical segment; the sequence is AWPIAAISGVGVLTSGFVSVI. The Cytoplasmic segment spans residues 204–211; it reads GYSATAAH. The chain crosses the membrane as a helical span at residues 212 to 232; the sequence is IASNSISLFIYFQNLAITAMM. Residues 233 to 347 are Lumenal-facing; sequence GVSRVPPIAA…AYLANIELSN (115 aa). The N-linked (GlcNAc...) asparagine glycan is linked to Asn323. Residues 348–368 form a helical membrane-spanning segment; the sequence is FFLTGIVFFLFFLFVVVVSLI. Residues 369 to 402 are Cytoplasmic-facing; the sequence is FFKALLEVLTRARILKETSNFFQYRKNWGSIIKG. Residues 403 to 423 form a helical membrane-spanning segment; sequence TLFRLSIIAFPQVSLLAIWEF. Residues 424–430 are Lumenal-facing; it reads TQVNSPA. The chain crosses the membrane as a helical span at residues 431–451; the sequence is IVVDAVVILLIITGLLVYGTI. The Cytoplasmic segment spans residues 452–492; it reads RVFIKGRESLRLYKNPAYLLYSDTYFLNKFGFLYVQFKADK. A helical transmembrane segment spans residues 493 to 513; the sequence is FWWLLPLLSYAFLRSLFVAVL. Over 514–521 the chain is Lumenal; sequence QNQGKAQA. A helical transmembrane segment spans residues 522-542; the sequence is MIIFVIELAYFVCLCWIRPYL. Residues 543 to 547 lie on the Cytoplasmic side of the membrane; it reads DKRTN. A helical membrane pass occupies residues 548–568; the sequence is VFNIAIHLVNLINAFFFLFFS. Topologically, residues 569-581 are lumenal; sequence NLFKQPAVVSSVM. The helical transmembrane segment at 582–602 threads the bilayer; the sequence is AVILFVLNAVFALFLLLFTIV. Over 603–783 the chain is Cytoplasmic; sequence TCTLALLHRN…ENARNNNPYL (181 aa). A disordered region spans residues 681 to 783; it reads RLFDDETSSS…ENARNNNPYL (103 aa). Residues 688-697 show a composition bias toward low complexity; the sequence is SSSSFKQNSS. 2 stretches are compositionally biased toward polar residues: residues 704–748 and 756–767; these read VTEQ…TSSL and YLGNSNKSYSHF. A compositionally biased stretch (low complexity) spans 768–783; that stretch reads NNNGSNENARNNNPYL.

Belongs to the transient receptor potential (TRP) ion channel family.

The protein resides in the endoplasmic reticulum membrane. In terms of biological role, may be responsible for the transport of FAD into the endoplasmic reticulum lumen, where it is required for oxidative protein folding. The protein is Flavin carrier protein 2 (FLC2) of Saccharomyces cerevisiae (strain ATCC 204508 / S288c) (Baker's yeast).